The following is a 475-amino-acid chain: MAASALRGPPVAGGGESSESEDDGWEIGYLDRTSQKLKGLLPIEEKKEKFKKAMTIGDVSLVQELLDSGISVDSTFQYGWTPLMYAASVANAELVRVLLDRGANASFEKDKQSILITACSAHGSEEQILKCVELLLSRNADPNVACRRLMTPIMYAARDGHTQVVALLVAHGAEVNTQDENGYTALTWAARQGHKNIVLKLLELGANKMLQTKDGKMPSEIAKRNKHHEIFNLLSFTLNPLEGRLQQLTKEDTICKILTTDSDREKDHIFSSYTAFGDLEVFLHGLGLEHMTDLLKERDITLRHLLTMREDEFTKNGITSKDQQKILAALKELQVEEIQFGELSEETKLEISGDEFLNFLLKLNKQCGHLITAVQNVITELPVNSQKITLEWASPQNFTSVCEELVNNVEDLSEKVCKLKDLIQKLQNERENDPTHIQLREEVSTWNSRILKRTAITICGFGFLLFICKLTFQRK.

Residues 1 to 24 (MAASALRGPPVAGGGESSESEDDG) are disordered. 3 positions are modified to phosphoserine: Ser-17, Ser-18, and Ser-20. ANK repeat units lie at residues 45-74 (EKKE…SVDS), 78-107 (YGWT…NASF), 110-144 (DKQS…DPNV), 148-177 (RLMT…EVNT), 181-210 (NGYT…NKML), and 214-243 (DGKM…PLEG). An SAM domain is found at 272 to 334 (SYTAFGDLEV…KILAALKELQ (63 aa)).

In terms of assembly, interacts with DDX4, PIWIL1, RANBP9 and TDRD1.

It is found in the cytoplasm. Plays a central role during spermatogenesis by repressing transposable elements and preventing their mobilization, which is essential for the germline integrity. Acts via the piRNA metabolic process, which mediates the repression of transposable elements during meiosis by forming complexes composed of piRNAs and Piwi proteins and governs the methylation and subsequent repression of transposons. Its association with pi-bodies suggests a participation in the primary piRNAs metabolic process. Required prior to the pachytene stage to facilitate the production of multiple types of piRNAs, including those associated with repeats involved in the regulation of retrotransposons. May act by mediating protein-protein interactions during germ cell maturation. The polypeptide is Ankyrin repeat, SAM and basic leucine zipper domain-containing protein 1 (ASZ1) (Gorilla gorilla gorilla (Western lowland gorilla)).